We begin with the raw amino-acid sequence, 638 residues long: UvrABC system protein C (638 aa).

A GIY-YIG domain is found at 20–97 (ECAGVYQMFD…IKKFQPKFNI (78 aa)). A UVR domain is found at 209-244 (KELQENLSKKMEELSSHMYFEEAAEIRDRIKALSYV).

It belongs to the UvrC family. As to quaternary structure, interacts with UvrB in an incision complex.

It is found in the cytoplasm. In terms of biological role, the UvrABC repair system catalyzes the recognition and processing of DNA lesions. UvrC both incises the 5' and 3' sides of the lesion. The N-terminal half is responsible for the 3' incision and the C-terminal half is responsible for the 5' incision. The chain is UvrABC system protein C from Rickettsia canadensis (strain McKiel).